Reading from the N-terminus, the 420-residue chain is MASLGADKKHKVTVVGSGNWGSTICKIVAENTKANPDLFEEAVHMWVFEEDVVIDKSSPYYDPAVGDAPQKLTGVINKYHENTKYLPGIKLPDNIIANPSLQDAVKDSTILVFNLPHQFIGNVCKQLRGHIMPFARGISCIKGVNVSDDGISLFSEWIGDGLGIYCGALSGANIASEIAAEKWSETTIAYDPPPMDNSRAPTPRSNSPANGNGIAPLTPVEMQHKDARGRTSKTKLTPVPAEYPPLDHQIFKQLFHRPYFHVRMVSDVAGVSLGGALKNIVALAAGFVDGRGWGDNAKAAIMRVGLLEMVNFGKEFFGQTVHTGTFTEESAGVADLITSCSGGRNFRCAKMAVAEGLSVEEIEKRELNGQLLQGTSTAKEVNSFLKARGLEKDYPLFTAVHGILEGRHSVDDIPSLVSDS.

NAD(+) contacts are provided by residues 16–21, F48, and F119; that span reads GSGNWG. Residue K142 participates in substrate binding. A175 provides a ligand contact to NAD(+). Positions 190–217 are disordered; the sequence is YDPPPMDNSRAPTPRSNSPANGNGIAPL. Residues 199 to 210 show a composition bias toward polar residues; the sequence is RAPTPRSNSPAN. The Proton acceptor role is filled by K278. NAD(+) contacts are provided by R344 and Q373. Substrate is bound at residue 344 to 345; it reads RN.

Belongs to the NAD-dependent glycerol-3-phosphate dehydrogenase family.

It carries out the reaction sn-glycerol 3-phosphate + NAD(+) = dihydroxyacetone phosphate + NADH + H(+). The protein is Glycerol-3-phosphate dehydrogenase [NAD(+)] of Colletotrichum gloeosporioides (Anthracnose fungus).